A 213-amino-acid polypeptide reads, in one-letter code: Large ribosomal subunit protein mL67 (213 aa).

It belongs to the mitochondrion-specific ribosomal protein mL67 family.

It is found in the nucleus. The protein localises to the mitochondrion. Its function is as follows. Transcription factor involved in regulation of RNA polymerase II-dependent transcription. Also involved in regulation of mitochondrial DNA recombination, maintenance and repair, and generation of homoplasmic cells. The chain is Large ribosomal subunit protein mL67 (MHR1) from Eremothecium gossypii (strain ATCC 10895 / CBS 109.51 / FGSC 9923 / NRRL Y-1056) (Yeast).